The chain runs to 1170 residues: Cellulose synthase-like protein D2 (1170 aa).

Disordered stretches follow at residues 1-75 (MASN…PESG) and 269-295 (NEVD…EFTS). The segment covering 10 to 24 (RHSNSSRLSRMSYSG) has biased composition (low complexity). Over residues 273-288 (NGGGGGGGGGLGGGDG) the composition is skewed to gly residues. A run of 2 helical transmembrane segments spans residues 311–331 (VLSP…LFLA) and 341–361 (AMWL…SWLL). Aspartate 441 is a catalytic residue. A coiled-coil region spans residues 527-551 (HAREEIKAMKRQREAALDDVVEAVK). The active site involves aspartate 873. 6 helical membrane-spanning segments follow: residues 955-975 (IFLI…QFIV), 981-1001 (TFLT…VLEI), 1027-1047 (LAAV…SFTL), 1070-1090 (SLMI…AVGF), 1104-1124 (LLGG…FAKG), and 1134-1154 (TIVF…WVAI).

The protein belongs to the glycosyltransferase 2 family. Plant cellulose synthase-like D subfamily.

It localises to the golgi apparatus membrane. In terms of biological role, thought to be a Golgi-localized beta-glycan synthase that polymerize the backbones of noncellulosic polysaccharides (hemicelluloses) of plant cell wall. The chain is Cellulose synthase-like protein D2 (CSLD2) from Oryza sativa subsp. indica (Rice).